Here is a 397-residue protein sequence, read N- to C-terminus: MSIAAVILAAGRGKRAGSLPKKPKQYRLLGQEPVICHTVRCFCQNPAITTIILVIHPEDRQICEQAIADFKEQLIIVEGGNTRQKSTLRGLQALRKFKPKYVHIHDGARPFVENKLLEQIHTTVTPQEGVLPVLAVCDTLKRINSTHHVLETIPRTHLYSAQTPQCFPFERILAAHEKAIKTCKKEFTDDSAIAEWFGISMRTIPGSPHNIKITWHEDLNTAHLYLQKKMQMFPDIRTGNGYDVHSFEEGNSLILCGIKIPFHKKLNGHSDADVALHALTDALLATRGAGDIGTHFPPSDPQWQNVSSEIFLRHALDIVKQAGGRIANVDITLIAEEPKIGPYRHAMVGNLMNMLTILPDRISIKATTNEKLGFIGRGEGIAAFATANVLYPGEIPK.

The tract at residues 1-236 is 2-C-methyl-D-erythritol 4-phosphate cytidylyltransferase; sequence MSIAAVILAA…QKKMQMFPDI (236 aa). Residues 237–397 form a 2-C-methyl-D-erythritol 2,4-cyclodiphosphate synthase region; it reads RTGNGYDVHS…NVLYPGEIPK (161 aa). A divalent metal cation-binding residues include Asp-243 and His-245. 4-CDP-2-C-methyl-D-erythritol 2-phosphate is bound by residues 243 to 245 and 269 to 270; these read DVH and HS. Position 277 (His-277) interacts with a divalent metal cation. Residues 291-293, 367-370, Phe-374, and Arg-377 each bind 4-CDP-2-C-methyl-D-erythritol 2-phosphate; these read DIG and TTNE.

This sequence in the N-terminal section; belongs to the IspD/TarI cytidylyltransferase family. IspD subfamily. It in the C-terminal section; belongs to the IspF family. The cofactor is a divalent metal cation.

It catalyses the reaction 2-C-methyl-D-erythritol 4-phosphate + CTP + H(+) = 4-CDP-2-C-methyl-D-erythritol + diphosphate. The catalysed reaction is 4-CDP-2-C-methyl-D-erythritol 2-phosphate = 2-C-methyl-D-erythritol 2,4-cyclic diphosphate + CMP. It functions in the pathway isoprenoid biosynthesis; isopentenyl diphosphate biosynthesis via DXP pathway; isopentenyl diphosphate from 1-deoxy-D-xylulose 5-phosphate: step 2/6. The protein operates within isoprenoid biosynthesis; isopentenyl diphosphate biosynthesis via DXP pathway; isopentenyl diphosphate from 1-deoxy-D-xylulose 5-phosphate: step 4/6. Functionally, bifunctional enzyme that catalyzes the formation of 4-diphosphocytidyl-2-C-methyl-D-erythritol from CTP and 2-C-methyl-D-erythritol 4-phosphate (MEP) (IspD), and catalyzes the conversion of 4-diphosphocytidyl-2-C-methyl-D-erythritol 2-phosphate (CDP-ME2P) to 2-C-methyl-D-erythritol 2,4-cyclodiphosphate (ME-CPP) with a corresponding release of cytidine 5-monophosphate (CMP) (IspF). The sequence is that of Bifunctional enzyme IspD/IspF from Bartonella henselae (strain ATCC 49882 / DSM 28221 / CCUG 30454 / Houston 1) (Rochalimaea henselae).